Consider the following 522-residue polypeptide: MQRAAVLVRRGSCPRASGPWGRSHSSAAAEASAALKVRPERSPRDRILTLESMNPQVKAVEYAVRGPIVLKAGEIEMELQRGIKKPFTEVIRANIGDAHAMGQQPITFLRQVMALCTYPNLLNSPSFPEDAKKRARRILQACGGNSLGSYSASQGVNCIREDVAAFITRRDGVPADPDNIYLTTGASDGISTILKLLVSGGGKSRTGVMIPIPQYPLYSAVISELDAVQVNYYLDEENCWALNVDELRRALRQAKDHCDPKVLCIINPGNPTGQVQSRKCIEDVIHFAWEEKLFLLADEVYQDNVYSPDCRFHSFKKVLYQMGHEYSSNVELASFHSTSKGYMGECGYRGGYMEVINLHPEIKGQLVKLLSVRLCPPVSGQAAMDIVVNPPEPGEESFEQFSREKEFVLGNLAKKAKLTEDLFNQVPGIQCNPLQGAMYAFPRILIPAKAVEAAQSHKMAPDMFYCMKLLEETGICVVPGSGFGQREGTYHFRMTILPPVDKLKTVLHKVKDFHLKFLEQYS.

At lysine 340 the chain carries N6-(pyridoxal phosphate)lysine. 3 positions are modified to N6-acetyllysine: lysine 414, lysine 504, and lysine 511.

The protein belongs to the class-I pyridoxal-phosphate-dependent aminotransferase family. Alanine aminotransferase subfamily. Homodimer. Requires pyridoxal 5'-phosphate as cofactor. In terms of tissue distribution, specifically induced in fatty liver. Highly expressed in muscle, liver and white adipose tissue. Moderately expressed in brain and kidney and expressed at low levels in the heart.

It catalyses the reaction L-alanine + 2-oxoglutarate = pyruvate + L-glutamate. The protein operates within amino-acid degradation; L-alanine degradation via transaminase pathway; pyruvate from L-alanine: step 1/1. Functionally, catalyzes the reversible transamination between alanine and 2-oxoglutarate to form pyruvate and glutamate. The chain is Alanine aminotransferase 2 (Gpt2) from Mus musculus (Mouse).